Here is a 41-residue protein sequence, read N- to C-terminus: U3-theraphotoxin-Hs1a (41 aa).

3 disulfides stabilise this stretch: Cys2/Cys16, Cys9/Cys37, and Cys17/Cys40.

Belongs to the neurotoxin 14 (magi-1) family. 01 (HNTX-16) subfamily. As to expression, expressed by the venom gland.

Its subcellular location is the secreted. Its function is as follows. Intracerebroventricular injection paralyzes mice. Has no effect on voltage-gated sodium currents. The chain is U3-theraphotoxin-Hs1a from Cyriopagopus schmidti (Chinese bird spider).